Consider the following 395-residue polypeptide: MAKETFDRSKPHVNIGTIGHVDHGKTTLTAAITTVLANKGLAAKRDFSSIDNAPEEKERGITINTAHVEYSTANRHYAHVDCPGHADYVKNMVTGAAQMDGAILVVAATDGPMPQTREHILLARQVGVPQLVVFMNKVDMVDDPELLELVEMEIRELLSFYDFDGDNIPVVQGSALGGLNGDAKWVGTIEQLMDSVDNWIPIPPRLTDQPFLMPVEDVFSITGRGTVATGRIERGVINSGEPVEILGMGAENLKSTVTGVEMFRKILDRGEAGDNVGLLLRGIEKEAIRRGMVICKPGSVTPHKKFKAEVYVLSKEEGGRHTPFFNNYRPQFYFRTTDVTGIISLAEGVEMVMPGDNVTISVELINAVAMEKGLRFAIREGGRTVGAGQVTEILD.

A tr-type G domain is found at 10–205 (KPHVNIGTIG…VDNWIPIPPR (196 aa)). The G1 stretch occupies residues 19–26 (GHVDHGKT). 19-26 (GHVDHGKT) contributes to the GTP binding site. Residue threonine 26 participates in Mg(2+) binding. A G2 region spans residues 60 to 64 (GITIN). The interval 81–84 (DCPG) is G3. Residues 81–85 (DCPGH) and 136–139 (NKVD) contribute to the GTP site. Residues 136–139 (NKVD) are G4. Positions 174–176 (SAL) are G5.

Belongs to the TRAFAC class translation factor GTPase superfamily. Classic translation factor GTPase family. EF-Tu/EF-1A subfamily. In terms of assembly, monomer.

It is found in the cytoplasm. It carries out the reaction GTP + H2O = GDP + phosphate + H(+). In terms of biological role, GTP hydrolase that promotes the GTP-dependent binding of aminoacyl-tRNA to the A-site of ribosomes during protein biosynthesis. The polypeptide is Elongation factor Tu (Hymenobacter ocellatus (Parahymenobacter ocellatus)).